Here is a 317-residue protein sequence, read N- to C-terminus: Acetyl-coenzyme A carboxylase carboxyl transferase subunit alpha (317 aa).

A CoA carboxyltransferase C-terminal domain is found at 40–293 (LEVRVREAIV…GDVIANALGE (254 aa)).

This sequence belongs to the AccA family. As to quaternary structure, acetyl-CoA carboxylase is a heterohexamer composed of biotin carboxyl carrier protein (AccB), biotin carboxylase (AccC) and two subunits each of ACCase subunit alpha (AccA) and ACCase subunit beta (AccD).

It localises to the cytoplasm. It carries out the reaction N(6)-carboxybiotinyl-L-lysyl-[protein] + acetyl-CoA = N(6)-biotinyl-L-lysyl-[protein] + malonyl-CoA. The protein operates within lipid metabolism; malonyl-CoA biosynthesis; malonyl-CoA from acetyl-CoA: step 1/1. Its function is as follows. Component of the acetyl coenzyme A carboxylase (ACC) complex. First, biotin carboxylase catalyzes the carboxylation of biotin on its carrier protein (BCCP) and then the CO(2) group is transferred by the carboxyltransferase to acetyl-CoA to form malonyl-CoA. The polypeptide is Acetyl-coenzyme A carboxylase carboxyl transferase subunit alpha (Rhizobium leguminosarum bv. trifolii (strain WSM2304)).